Here is a 413-residue protein sequence, read N- to C-terminus: Multifunctional CCA protein (413 aa).

Residues glycine 8 and arginine 11 each contribute to the ATP site. CTP-binding residues include glycine 8 and arginine 11. Residues aspartate 21 and aspartate 23 each coordinate Mg(2+). ATP contacts are provided by arginine 91, arginine 137, and arginine 140. CTP is bound by residues arginine 91, arginine 137, and arginine 140. The region spanning 228-329 is the HD domain; sequence TGIHTLMVLE…VKIFDKADLW (102 aa).

The protein belongs to the tRNA nucleotidyltransferase/poly(A) polymerase family. Bacterial CCA-adding enzyme type 1 subfamily. As to quaternary structure, monomer. Can also form homodimers and oligomers. Requires Mg(2+) as cofactor. It depends on Ni(2+) as a cofactor.

It catalyses the reaction a tRNA precursor + 2 CTP + ATP = a tRNA with a 3' CCA end + 3 diphosphate. It carries out the reaction a tRNA with a 3' CCA end + 2 CTP + ATP = a tRNA with a 3' CCACCA end + 3 diphosphate. Catalyzes the addition and repair of the essential 3'-terminal CCA sequence in tRNAs without using a nucleic acid template. Adds these three nucleotides in the order of C, C, and A to the tRNA nucleotide-73, using CTP and ATP as substrates and producing inorganic pyrophosphate. tRNA 3'-terminal CCA addition is required both for tRNA processing and repair. Also involved in tRNA surveillance by mediating tandem CCA addition to generate a CCACCA at the 3' terminus of unstable tRNAs. While stable tRNAs receive only 3'-terminal CCA, unstable tRNAs are marked with CCACCA and rapidly degraded. The protein is Multifunctional CCA protein of Shewanella sediminis (strain HAW-EB3).